Consider the following 178-residue polypeptide: Cell division protein ZapC (178 aa).

Belongs to the ZapC family. Interacts directly with FtsZ.

Its subcellular location is the cytoplasm. Functionally, contributes to the efficiency of the cell division process by stabilizing the polymeric form of the cell division protein FtsZ. Acts by promoting interactions between FtsZ protofilaments and suppressing the GTPase activity of FtsZ. The polypeptide is Cell division protein ZapC (Pseudoalteromonas atlantica (strain T6c / ATCC BAA-1087)).